We begin with the raw amino-acid sequence, 1078 residues long: A type blood alpha-D-galactosamine galactosaminidase (1078 aa).

The first 26 residues, 1-26, serve as a signal peptide directing secretion; that stretch reads MRGKKFISLTLSTMLCLQLLPTASFA. Positions 306-570 are glycoside hydrolase 36 domain; it reads PDSSYDLRWE…NNIWYPSAVG (265 aa). D463 acts as the Nucleophile in catalysis. D532 is a catalytic residue. The segment at 699–1078 is not required for activity on soluble substrates; that stretch reads PDPEPVDPDY…LDYLTYTTNA (380 aa).

It belongs to the glycosyl hydrolase 36 family.

The catalysed reaction is an alpha-D-galactosaminyl-(1-&gt;3)-[alpha-L-fucosyl-(1-&gt;2)]-beta-D-galactosyl derivative + H2O = D-galactosamine + an alpha-L-fucosyl-(1-&gt;2)-beta-D-galactosyl derivative. In terms of biological role, one of an enzyme pair that work together to convert the A antigen to the H antigen of the O blood type, which together release galactosamine. Catalyzes the second step in the conversion, acts on the product of the first reaction (FpGalNAcDeAc, AC P0DTR4). Is specific for galactosamine containing sugars, does not cleave GalNAc residues. This is A type blood alpha-D-galactosamine galactosaminidase from Flavonifractor plautii (Fusobacterium plautii).